A 90-amino-acid chain; its full sequence is Serine-rich and transmembrane domain-containing 2 (90 aa).

N11 is a glycosylation site (N-linked (GlcNAc...) asparagine). A helical membrane pass occupies residues 38–58; that stretch reads YVGLFLSLLAILLILLFTMLL. The segment at 69-90 is disordered; that stretch reads SDSTESVPQFTDVEMQSRIPTP.

The protein resides in the membrane. The protein is Serine-rich and transmembrane domain-containing 2 of Homo sapiens (Human).